Consider the following 200-residue polypeptide: Large ribosomal subunit protein bL9 (200 aa).

It belongs to the bacterial ribosomal protein bL9 family.

Binds to the 23S rRNA. This chain is Large ribosomal subunit protein bL9, found in Ruegeria pomeroyi (strain ATCC 700808 / DSM 15171 / DSS-3) (Silicibacter pomeroyi).